Consider the following 202-residue polypeptide: GTP cyclohydrolase 1 (202 aa).

Residues Cys90, His93, and Cys163 each coordinate Zn(2+).

Belongs to the GTP cyclohydrolase I family. As to quaternary structure, toroid-shaped homodecamer, composed of two pentamers of five dimers.

It carries out the reaction GTP + H2O = 7,8-dihydroneopterin 3'-triphosphate + formate + H(+). The protein operates within cofactor biosynthesis; 7,8-dihydroneopterin triphosphate biosynthesis; 7,8-dihydroneopterin triphosphate from GTP: step 1/1. This chain is GTP cyclohydrolase 1, found in Mycolicibacterium vanbaalenii (strain DSM 7251 / JCM 13017 / BCRC 16820 / KCTC 9966 / NRRL B-24157 / PYR-1) (Mycobacterium vanbaalenii).